Reading from the N-terminus, the 379-residue chain is Reducing end xylose-releasing exo-oligoxylanase (379 aa).

Catalysis depends on glutamate 66, which acts as the Proton donor. The Proton acceptor role is filled by aspartate 259.

Belongs to the glycosyl hydrolase 8 (cellulase D) family.

The enzyme catalyses Hydrolysis of (1-&gt;4)-beta-D-xylose residues from the reducing end of oligosaccharides.. Functionally, hydrolyzes xylooligosaccharides with a degree of polymerization of greater than or equal to 3, releasing xylose from the reducing end. Has low activity on birchwood xylan, oat spelt xylan and arabinoxylan. The chain is Reducing end xylose-releasing exo-oligoxylanase from Bifidobacterium adolescentis (strain ATCC 15703 / DSM 20083 / NCTC 11814 / E194a).